An 899-amino-acid chain; its full sequence is Gamma-aminobutyric acid type B receptor subunit 1 (899 aa).

Residues methionine 1–alanine 19 form the signal peptide. At glutamate 20–glutamate 447 the chain is on the extracellular side. N-linked (GlcNAc...) asparagine glycosylation is found at asparagine 69, asparagine 266, asparagine 339, asparagine 353, and asparagine 371. A helical membrane pass occupies residues phenylalanine 448–leucine 468. Topologically, residues phenylalanine 469–asparagine 487 are cytoplasmic. The helical transmembrane segment at asparagine 488–serine 508 threads the bilayer. Topologically, residues aspartate 509–arginine 525 are extracellular. The chain crosses the membrane as a helical span at residues valine 526–isoleucine 546. Residues valine 547–phenylalanine 616 are Cytoplasmic-facing. A helical membrane pass occupies residues tyrosine 617–isoleucine 637. Topologically, residues aspartate 638–glutamate 674 are extracellular. The chain crosses the membrane as a helical span at residues valine 675 to serine 695. The Cytoplasmic segment spans residues tyrosine 696 to glycine 713. The chain crosses the membrane as a helical span at residues leucine 714–isoleucine 734. Residues histidine 735 to asparagine 741 are Extracellular-facing. A helical transmembrane segment spans residues phenylalanine 742–glycine 762. The Cytoplasmic segment spans residues proline 763–leucine 899. Residues lysine 791–leucine 842 adopt a coiled-coil conformation. The segment at aspartate 870 to leucine 899 is disordered. The segment covering serine 890–leucine 899 has biased composition (low complexity).

The protein belongs to the G-protein coupled receptor 3 family. As to quaternary structure, may form a heterodimer with gbb-2. In terms of tissue distribution, expressed in the nervous system, including cholinergic motor neurons, but not in GABAergic motor neurons or muscle.

It localises to the cell membrane. Functionally, component of a heterodimeric G-protein coupled receptor for GABA, formed by gbb-1 and gbb-2. Within the heterodimeric GABA receptor, only gbb-1 seems to bind agonists, while gbb-2 mediates coupling to G proteins. Ligand binding causes a conformation change that triggers signaling via guanine nucleotide-binding proteins (G proteins) and modulates the activity of down-stream effectors, such as adenylate cyclase. Signaling inhibits adenylate cyclase, stimulates phospholipase A2, activates potassium channels, inactivates voltage-dependent calcium-channels and modulates inositol phospholipid hydrolysis. Calcium is required for high affinity binding to GABA. Plays a critical role in the fine-tuning of inhibitory synaptic transmission. Pre-synaptic GABA receptor inhibits neurotransmitter release by down-regulating high-voltage activated calcium channels, whereas postsynaptic GABA receptor decreases neuronal excitability by activating a prominent inwardly rectifying potassium (Kir) conductance that underlies the late inhibitory postsynaptic potentials. Along with gbb-2, may couple to the G(o)-alpha G-protein goa-1 to negatively regulate cholinergic receptor activity in the presence of high levels of acetylcholine in ventral cord motor neurons. As acetylcholine depolarizes body wall muscles, modulation of acetylcholine levels most likely results in the control of locomotory behavior. Acts in neurons to regulate lifespan, and this may be through G-protein-egl-8/PLC-beta signaling to the transcription factor daf-16/FOXO. The chain is Gamma-aminobutyric acid type B receptor subunit 1 from Caenorhabditis elegans.